The chain runs to 223 residues: Carnitine transport permease protein OpuCD (223 aa).

An ABC transmembrane type-1 domain is found at 22-202; it reads FWRHFLMSAY…VMAILADVLL (181 aa). The next 5 membrane-spanning stretches (helical) occupy residues 27–47, 63–83, 87–107, 148–168, and 182–202; these read LMSA…GVYI, IIQT…MGLG, VVLS…YTGI, ALVI…GGLG, and AIIL…DVLL.

The protein belongs to the binding-protein-dependent transport system permease family. In terms of assembly, the complex is composed of two ATP-binding proteins (OpuCA), two transmembrane proteins (OpuCB and OpuCD) and a solute-binding protein (OpuCC).

Its subcellular location is the cell membrane. In terms of biological role, part of the ABC transporter complex OpuCABCD involved in carnitine uptake. Probably responsible for the translocation of the substrate across the membrane. Involved, with BetL and GbuABC, in osmoprotection and cryoprotection of Listeria. Can also mediate weak glycine betaine transport. The protein is Carnitine transport permease protein OpuCD (opuCD) of Listeria monocytogenes serotype 1/2a (strain 10403S).